The sequence spans 350 residues: MAATSLMSALAARLLQPAHSCSLRLRPFHLAAVRNEAVVISGRKLAQQIKQEVRQEVEEWVASGNKRPHLSVILVGENPASHSYVLNKTRAAAVVGINSETIMKPASISEEELLNLINKLNNDDNVDGLLVQLPLPEHIDERRICNAVSPDKDVDGFHVINVGRMCLDQYSMLPATPWGVWEIIKRTGIPTLGKNVVVAGRSKNVGMPIAMLLHTDGAHERPGGDATVTISHRYTPKEQLKKHTILADIVISAAGIPNLITADMIKEGAAVIDVGINRVHDPVTAKPKLVGDVDFEGVRQKAGYITPVPGGVGPMTVAMLMKNTIIAAKKVLRLEEREVLKSKELGVATN.

The N-terminal 35 residues, 1–35, are a transit peptide targeting the mitochondrion; it reads MAATSLMSALAARLLQPAHSCSLRLRPFHLAAVRN. Residue lysine 50 is modified to N6-acetyllysine; alternate. A Glycyl lysine isopeptide (Lys-Gly) (interchain with G-Cter in SUMO2); alternate cross-link involves residue lysine 50. Substrate is bound by residues 84-88 and 131-133; these read YVLNK and VQL. NAD(+) is bound by residues 200 to 202 and arginine 233; that span reads GRS. 309-313 contacts substrate; the sequence is PGGVG.

The protein belongs to the tetrahydrofolate dehydrogenase/cyclohydrolase family. In terms of assembly, homodimer. The cofactor is Mg(2+).

Its subcellular location is the mitochondrion. It carries out the reaction (6R)-5,10-methylene-5,6,7,8-tetrahydrofolate + NAD(+) = (6R)-5,10-methenyltetrahydrofolate + NADH. The enzyme catalyses (6R)-5,10-methenyltetrahydrofolate + H2O = (6R)-10-formyltetrahydrofolate + H(+). In terms of biological role, although its dehydrogenase activity is NAD-specific, it can also utilize NADP at a reduced efficiency. In Homo sapiens (Human), this protein is Bifunctional methylenetetrahydrofolate dehydrogenase/cyclohydrolase, mitochondrial (MTHFD2).